The chain runs to 67 residues: Large ribosomal subunit protein uL29 (67 aa).

Belongs to the universal ribosomal protein uL29 family.

The polypeptide is Large ribosomal subunit protein uL29 (Acetivibrio thermocellus (strain ATCC 27405 / DSM 1237 / JCM 9322 / NBRC 103400 / NCIMB 10682 / NRRL B-4536 / VPI 7372) (Clostridium thermocellum)).